A 482-amino-acid polypeptide reads, in one-letter code: Sensor histidine kinase CusS (482 aa).

Topologically, residues 1-15 (MVSKPFQRPFSLATR) are cytoplasmic. The helical transmembrane segment at 16-36 (LTFFISLATIAAFFAFAWIMI) threads the bilayer. Residues 37–186 (HSVKVHFAEQ…LHYINDLMNK (150 aa)) are Periplasmic-facing. A helical transmembrane segment spans residues 187–207 (LIMTASVISILIVFIVLLAVH). The HAMP domain occupies 207–260 (HKGHAPIRSVSRQIQNITSKDLDVRLDPQTVPIELEQLVLSFNHMIERIEDVFT). The Cytoplasmic segment spans residues 208–482 (KGHAPIRSVS…RFVIVLPERG (275 aa)). The Histidine kinase domain occupies 268-482 (DIAHEIRTPI…RFVIVLPERG (215 aa)). His-271 carries the phosphohistidine; by autocatalysis modification.

Autophosphorylated.

It localises to the cell inner membrane. It catalyses the reaction ATP + protein L-histidine = ADP + protein N-phospho-L-histidine.. Its function is as follows. Member of the two-component regulatory system CusS/CusR involved in response to copper and silver. Acts as a copper/silver ion sensor. Activates CusR by phosphorylation. In Escherichia coli O157:H7, this protein is Sensor histidine kinase CusS (cusS).